We begin with the raw amino-acid sequence, 247 residues long: UPF0309 protein GWCH70_1414 (247 aa).

Positions 31–214 (VSEAIQKGGI…VLMAENGFEP (184 aa)) constitute an SIS domain.

This sequence belongs to the UPF0309 family.

The polypeptide is UPF0309 protein GWCH70_1414 (Geobacillus sp. (strain WCH70)).